A 445-amino-acid chain; its full sequence is Na(+)-translocating NADH-quinone reductase subunit A (445 aa).

The protein belongs to the NqrA family. In terms of assembly, composed of six subunits; NqrA, NqrB, NqrC, NqrD, NqrE and NqrF.

It catalyses the reaction a ubiquinone + n Na(+)(in) + NADH + H(+) = a ubiquinol + n Na(+)(out) + NAD(+). In terms of biological role, NQR complex catalyzes the reduction of ubiquinone-1 to ubiquinol by two successive reactions, coupled with the transport of Na(+) ions from the cytoplasm to the periplasm. NqrA to NqrE are probably involved in the second step, the conversion of ubisemiquinone to ubiquinol. This is Na(+)-translocating NADH-quinone reductase subunit A from Pseudomonas aeruginosa (strain UCBPP-PA14).